Here is a 185-residue protein sequence, read N- to C-terminus: Large ribosomal subunit protein uL5 (185 aa).

Belongs to the universal ribosomal protein uL5 family. In terms of assembly, part of the 50S ribosomal subunit; part of the 5S rRNA subcomplex. Contacts the 5S rRNA and the P site tRNA. Forms a bridge to the 30S subunit in the 70S ribosome. Both N-terminus methionine truncation and retention have been observed for this protein. Post-translationally, may be methylated twice, on undetermined residues.

In terms of biological role, this is one of the proteins that bind and probably mediate the attachment of the 5S RNA into the large ribosomal subunit, where it forms part of the central protuberance. In the 70S ribosome it contacts protein S13 of the 30S subunit (bridge B1b), connecting the 2 subunits; this bridge is implicated in subunit movement. Contacts the P site tRNA; the 5S rRNA and some of its associated proteins might help stabilize positioning of ribosome-bound tRNAs. This Rhodopseudomonas palustris (strain ATCC BAA-98 / CGA009) protein is Large ribosomal subunit protein uL5.